Consider the following 131-residue polypeptide: Peptide methionine sulfoxide reductase MsrB (131 aa).

One can recognise a MsrB domain in the interval 8–130 (LEEWRAMLDP…NSVCLDLKPR (123 aa)). Zn(2+)-binding residues include C47, C50, C96, and C99. Catalysis depends on C119, which acts as the Nucleophile.

Belongs to the MsrB Met sulfoxide reductase family. Zn(2+) is required as a cofactor.

It catalyses the reaction L-methionyl-[protein] + [thioredoxin]-disulfide + H2O = L-methionyl-(R)-S-oxide-[protein] + [thioredoxin]-dithiol. The chain is Peptide methionine sulfoxide reductase MsrB from Pseudomonas entomophila (strain L48).